A 176-amino-acid chain; its full sequence is NAD(P)H-quinone oxidoreductase subunit 6, chloroplastic (176 aa).

A run of 5 helical transmembrane segments spans residues 10-30 (ILML…VLLT), 33-53 (IYSA…YFLL), 60-80 (VAQL…AVMF), 95-115 (IGDG…MTTI), and 152-172 (FYLP…GAIT).

This sequence belongs to the complex I subunit 6 family. NDH is composed of at least 16 different subunits, 5 of which are encoded in the nucleus.

Its subcellular location is the plastid. It localises to the chloroplast thylakoid membrane. It catalyses the reaction a plastoquinone + NADH + (n+1) H(+)(in) = a plastoquinol + NAD(+) + n H(+)(out). It carries out the reaction a plastoquinone + NADPH + (n+1) H(+)(in) = a plastoquinol + NADP(+) + n H(+)(out). Its function is as follows. NDH shuttles electrons from NAD(P)H:plastoquinone, via FMN and iron-sulfur (Fe-S) centers, to quinones in the photosynthetic chain and possibly in a chloroplast respiratory chain. The immediate electron acceptor for the enzyme in this species is believed to be plastoquinone. Couples the redox reaction to proton translocation, and thus conserves the redox energy in a proton gradient. This is NAD(P)H-quinone oxidoreductase subunit 6, chloroplastic (ndhG) from Hordeum vulgare (Barley).